Here is a 511-residue protein sequence, read N- to C-terminus: Maturase K (511 aa).

This sequence belongs to the intron maturase 2 family. MatK subfamily.

It localises to the plastid. The protein resides in the chloroplast. Its function is as follows. Usually encoded in the trnK tRNA gene intron. Probably assists in splicing its own and other chloroplast group II introns. This chain is Maturase K, found in Lolium perenne (Perennial ryegrass).